Consider the following 762-residue polypeptide: Phospholipase D alpha 4 (762 aa).

One can recognise a C2 domain in the interval 1–116 (MELEEQKKYF…VINGFFPLIA (116 aa)). D172 contributes to the Ca(2+) binding site. Residues 301 to 339 (TAFAHHQKTITLDTRVTNSSTKEREIMSFLGGFDLCDGR) form the PLD phosphodiesterase 1 domain. Active-site residues include H306, K308, and D313. A 1,2-diacyl-sn-glycero-3-phosphate is bound at residue H306. The Ca(2+) site is built by H345 and H377. The a 1,2-diacyl-sn-glycero-3-phosphate site is built by Q477 and H615. The PLD phosphodiesterase 2 domain maps to 610 to 637 (FMVYVHSKLMIVDDTYILIGSANINQRS). Active-site residues include H615, K617, and D622. E671 contacts Ca(2+).

Belongs to the phospholipase D family. C2-PLD subfamily. Ca(2+) is required as a cofactor. In terms of tissue distribution, expressed in roots, leaves, stems, siliques,flowers and inflorescences.

It is found in the cell membrane. The catalysed reaction is a 1,2-diacyl-sn-glycero-3-phosphocholine + H2O = a 1,2-diacyl-sn-glycero-3-phosphate + choline + H(+). Its function is as follows. Hydrolyzes glycerol-phospholipids at the terminal phosphodiesteric bond to generate phosphatidic acids (PA). Promotes growth and plays a role in nitrogen signaling. The sequence is that of Phospholipase D alpha 4 from Arabidopsis thaliana (Mouse-ear cress).